A 308-amino-acid chain; its full sequence is Cysteine synthase (308 aa).

Position 45 is an N6-(pyridoxal phosphate)lysine (lysine 45). Pyridoxal 5'-phosphate is bound by residues asparagine 75, 179–183 (GTGGT), and serine 267.

Belongs to the cysteine synthase/cystathionine beta-synthase family. As to quaternary structure, homodimer. Forms CymR(2):CysK(2) or CymR(4):CysK(4) complexes in the absence of O-acetylserine. The cofactor is pyridoxal 5'-phosphate.

It catalyses the reaction O-acetyl-L-serine + hydrogen sulfide = L-cysteine + acetate. It functions in the pathway amino-acid biosynthesis; L-cysteine biosynthesis; L-cysteine from L-serine: step 2/2. Catalyzes the conversion of O-acetylserine to cysteine. Also acts as a sensor of cysteine availability in the signal transduction pathway modulating CymR activity. When cysteine is present, the pool of O-acetylserine (OAS) is low, which leads to the formation of a CymR-CysK complex and transcriptional repression of the CymR regulon occurs. In the absence of cysteine, the OAS pool is high and the CymR-CysK complex is mostly dissociated, leading to a faster dissociation of CymR from its DNA targets and the lifting of CymR-dependent repression. This Bacillus subtilis (strain 168) protein is Cysteine synthase (cysK).